The chain runs to 423 residues: Anhydromevalonate phosphate decarboxylase (423 aa).

Positions 134 and 197 each coordinate Mn(2+). Aspartate 245 serves as the catalytic Proton acceptor.

The protein belongs to the UbiD family. It depends on prenylated FMN as a cofactor. Mn(2+) is required as a cofactor.

The enzyme catalyses (2E)-3-methyl-5-phosphooxypent-2-enoate + H(+) = isopentenyl phosphate + CO2. It functions in the pathway isoprenoid biosynthesis; isopentenyl diphosphate biosynthesis via mevalonate pathway. Functionally, catalyzes the conversion of trans-anhydromevalonate 5-phosphate (tAHMP) into isopentenyl phosphate. Involved in the archaeal mevalonate (MVA) pathway, which provides fundamental precursors for isoprenoid biosynthesis, such as isopentenyl diphosphate (IPP) and dimethylallyl diphosphate (DMAPP). This Methanothermobacter thermautotrophicus (strain ATCC 29096 / DSM 1053 / JCM 10044 / NBRC 100330 / Delta H) (Methanobacterium thermoautotrophicum) protein is Anhydromevalonate phosphate decarboxylase.